Here is a 278-residue protein sequence, read N- to C-terminus: Aquaporin NIP3-3 (278 aa).

A run of 2 helical transmembrane segments spans residues 70 to 90 and 99 to 119; these read VSAE…TIIM and TLLG…LSLI. The NPA 1 signature appears at 127–129; sequence NPA. 3 helical membrane passes run 141–163, 185–205, and 213–233; these read PSAH…SFAV, AFFV…ALAT, and LIAV…GPST. The short motif at 238–240 is the NPA 2 element; sequence NPA. The chain crosses the membrane as a helical span at residues 255–275; the sequence is IWVYLVATPLGAIAGTGAYVA.

This sequence belongs to the MIP/aquaporin (TC 1.A.8) family. NIP (TC 1.A.8.12) subfamily. Expressed in leaves and at lower levels in roots and anthers.

It is found in the membrane. Functionally, aquaporins facilitate the transport of water and small neutral solutes across cell membranes. The protein is Aquaporin NIP3-3 (NIP3-3) of Oryza sativa subsp. japonica (Rice).